Reading from the N-terminus, the 211-residue chain is Pyridoxine/pyridoxamine 5'-phosphate oxidase (211 aa).

Substrate contacts are provided by residues 8–11 and Lys66; that span reads RRDY. Residues 61 to 66, 76 to 77, Arg82, Lys83, and Gln105 each bind FMN; these read RLVLLK and FT. 3 residues coordinate substrate: Tyr123, Arg127, and Ser131. FMN-binding positions include 140–141 and Trp184; that span reads QS. Residue 190 to 192 coordinates substrate; sequence RLH. Arg194 contributes to the FMN binding site.

It belongs to the pyridoxamine 5'-phosphate oxidase family. In terms of assembly, homodimer. FMN is required as a cofactor.

The catalysed reaction is pyridoxamine 5'-phosphate + O2 + H2O = pyridoxal 5'-phosphate + H2O2 + NH4(+). It carries out the reaction pyridoxine 5'-phosphate + O2 = pyridoxal 5'-phosphate + H2O2. It participates in cofactor metabolism; pyridoxal 5'-phosphate salvage; pyridoxal 5'-phosphate from pyridoxamine 5'-phosphate: step 1/1. It functions in the pathway cofactor metabolism; pyridoxal 5'-phosphate salvage; pyridoxal 5'-phosphate from pyridoxine 5'-phosphate: step 1/1. Its function is as follows. Catalyzes the oxidation of either pyridoxine 5'-phosphate (PNP) or pyridoxamine 5'-phosphate (PMP) into pyridoxal 5'-phosphate (PLP). This chain is Pyridoxine/pyridoxamine 5'-phosphate oxidase, found in Thermosynechococcus vestitus (strain NIES-2133 / IAM M-273 / BP-1).